Consider the following 109-residue polypeptide: Cell division protein ZapA (109 aa).

The stretch at P21–K99 forms a coiled coil.

This sequence belongs to the ZapA family. Type 1 subfamily. Homodimer. Interacts with FtsZ.

It localises to the cytoplasm. Its function is as follows. Activator of cell division through the inhibition of FtsZ GTPase activity, therefore promoting FtsZ assembly into bundles of protofilaments necessary for the formation of the division Z ring. It is recruited early at mid-cell but it is not essential for cell division. In Pectobacterium atrosepticum (strain SCRI 1043 / ATCC BAA-672) (Erwinia carotovora subsp. atroseptica), this protein is Cell division protein ZapA.